Consider the following 262-residue polypeptide: Acyl-[acyl-carrier-protein]--UDP-N-acetylglucosamine O-acyltransferase (262 aa).

Belongs to the transferase hexapeptide repeat family. LpxA subfamily. Homotrimer.

Its subcellular location is the cytoplasm. The enzyme catalyses a (3R)-hydroxyacyl-[ACP] + UDP-N-acetyl-alpha-D-glucosamine = a UDP-3-O-[(3R)-3-hydroxyacyl]-N-acetyl-alpha-D-glucosamine + holo-[ACP]. It functions in the pathway glycolipid biosynthesis; lipid IV(A) biosynthesis; lipid IV(A) from (3R)-3-hydroxytetradecanoyl-[acyl-carrier-protein] and UDP-N-acetyl-alpha-D-glucosamine: step 1/6. In terms of biological role, involved in the biosynthesis of lipid A, a phosphorylated glycolipid that anchors the lipopolysaccharide to the outer membrane of the cell. The chain is Acyl-[acyl-carrier-protein]--UDP-N-acetylglucosamine O-acyltransferase from Paraburkholderia phymatum (strain DSM 17167 / CIP 108236 / LMG 21445 / STM815) (Burkholderia phymatum).